The following is a 39-amino-acid chain: Photosystem II reaction center protein X (39 aa).

Residues 10-30 traverse the membrane as a helical segment; it reads WSLLWGTAIVVIPVTVGLIFI.

It belongs to the PsbX family. Type 1 subfamily. PSII is composed of 1 copy each of membrane proteins PsbA, PsbB, PsbC, PsbD, PsbE, PsbF, PsbH, PsbI, PsbJ, PsbK, PsbL, PsbM, PsbT, PsbX, PsbY, PsbZ, Psb30/Ycf12, peripheral proteins PsbO, CyanoQ (PsbQ), PsbU, PsbV and a large number of cofactors. It forms dimeric complexes.

It localises to the cellular thylakoid membrane. In terms of biological role, involved in the binding and/or turnover of quinones at the Q(B) site of photosystem II (PSII). PSII is a light-driven water plastoquinone oxidoreductase, using light energy to abstract electrons from H(2)O, generating a proton gradient subsequently used for ATP formation. In Nostoc punctiforme (strain ATCC 29133 / PCC 73102), this protein is Photosystem II reaction center protein X.